The primary structure comprises 65 residues: Large ribosomal subunit protein bL35 (65 aa).

The span at 1 to 16 (MPKMKTKSSAKKRFKV) shows a compositional bias: basic residues. The segment at 1–26 (MPKMKTKSSAKKRFKVRSSGGIKRSQ) is disordered.

It belongs to the bacterial ribosomal protein bL35 family.

The chain is Large ribosomal subunit protein bL35 from Azoarcus sp. (strain BH72).